A 165-amino-acid chain; its full sequence is Small ribosomal subunit protein uS5 (165 aa).

In terms of domain architecture, S5 DRBM spans 10–73 (QIEKLISLNR…TSARKNLRFV (64 aa)).

It belongs to the universal ribosomal protein uS5 family. As to quaternary structure, part of the 30S ribosomal subunit. Contacts proteins S4 and S8.

In terms of biological role, with S4 and S12 plays an important role in translational accuracy. Located at the back of the 30S subunit body where it stabilizes the conformation of the head with respect to the body. In Borreliella afzelii (strain PKo) (Borrelia afzelii), this protein is Small ribosomal subunit protein uS5.